A 437-amino-acid chain; its full sequence is Tol-Pal system protein TolB (437 aa).

An N-terminal signal peptide occupies residues 1–23 (MQKRHPIIYLLITLLIFVPVSYG).

This sequence belongs to the TolB family. The Tol-Pal system is composed of five core proteins: the inner membrane proteins TolA, TolQ and TolR, the periplasmic protein TolB and the outer membrane protein Pal. They form a network linking the inner and outer membranes and the peptidoglycan layer.

It localises to the periplasm. Its function is as follows. Part of the Tol-Pal system, which plays a role in outer membrane invagination during cell division and is important for maintaining outer membrane integrity. The polypeptide is Tol-Pal system protein TolB (Coxiella burnetii (strain RSA 493 / Nine Mile phase I)).